Consider the following 525-residue polypeptide: GMP synthase [glutamine-hydrolyzing] (525 aa).

The region spanning 13 to 202 (TILVLDFGSQ…AVDLCHAKQN (190 aa)) is the Glutamine amidotransferase type-1 domain. Cys89 acts as the Nucleophile in catalysis. Residues His176 and Glu178 contribute to the active site. The GMPS ATP-PPase domain maps to 203–400 (WTMKNFIGTE…LGISHELVWR (198 aa)). 231 to 237 (SGGVDST) is an ATP binding site. Residues Arg304, Asp462, Lys517, and Glu523 each coordinate XMP.

Homodimer. It depends on Mg(2+) as a cofactor.

Its subcellular location is the cytoplasm. It localises to the cytosol. It carries out the reaction XMP + L-glutamine + ATP + H2O = GMP + L-glutamate + AMP + diphosphate + 2 H(+). It functions in the pathway purine metabolism; GMP biosynthesis; GMP from XMP (L-Gln route): step 1/1. Catalyzes the conversion of xanthine monophosphate (XMP) to GMP in the presence of glutamine and ATP through an adenyl-XMP intermediate. The chain is GMP synthase [glutamine-hydrolyzing] (GUA1) from Candida glabrata (strain ATCC 2001 / BCRC 20586 / JCM 3761 / NBRC 0622 / NRRL Y-65 / CBS 138) (Yeast).